Reading from the N-terminus, the 93-residue chain is Small ribosomal subunit protein uS19 (93 aa).

The segment at Met1–Asn23 is disordered. The segment covering Pro9–Asn23 has biased composition (basic and acidic residues).

The protein belongs to the universal ribosomal protein uS19 family.

Protein S19 forms a complex with S13 that binds strongly to the 16S ribosomal RNA. In Nocardioides sp. (strain ATCC BAA-499 / JS614), this protein is Small ribosomal subunit protein uS19.